A 553-amino-acid chain; its full sequence is Peroxiredoxin-2A (553 aa).

Residues isoleucine 4–serine 160 enclose the Thioredoxin domain. The active-site Cysteine sulfenic acid (-SOH) intermediate is the cysteine 51. One can recognise an F-box domain in the interval threonine 156–methionine 201.

It belongs to the peroxiredoxin family. Prx5 subfamily. As to quaternary structure, monomer.

It carries out the reaction [glutaredoxin]-dithiol + a hydroperoxide = [glutaredoxin]-disulfide + an alcohol + H2O. Functionally, thiol-specific peroxidase that catalyzes the reduction of hydrogen peroxide and organic hydroperoxides to water and alcohols, respectively. Plays a role in cell protection against oxidative stress by detoxifying peroxides. May be involved in intracellular redox signaling. This Arabidopsis thaliana (Mouse-ear cress) protein is Peroxiredoxin-2A (PRXIIA).